Reading from the N-terminus, the 1035-residue chain is Cell-division control histidine kinase PdhS (1035 aa).

The interval 1-613 (MSGSYPFIDI…HADGSEEPVD (613 aa)) is important for polar localization. Residues 500-533 (QGLANTRAESETPVSETSSIEPVEPTPPVKTRSE) are disordered. The interaction with DivK stretch occupies residues 614–1035 (AHLNAIAWRG…VFPPTRVLAD (422 aa)). In terms of domain architecture, PAS spans 659–730 (HVEELKTILD…YLHGLSGNGV (72 aa)). In terms of domain architecture, Histidine kinase spans 802–1031 (RISHEIRTPL…VVEIVFPPTR (230 aa)). Position 805 is a phosphohistidine; by autocatalysis (H805).

In terms of assembly, interacts with DivK.

The protein localises to the cytoplasm. The catalysed reaction is ATP + protein L-histidine = ADP + protein N-phospho-L-histidine.. Its function is as follows. Functions as a polar differentiation marker. Essential protein that, by localizing in the old pole of dividing cells, controls cell division and maturation, probably through control of DivK phosphorylation status and cellular distribution, which in turn regulates CtrA, a transcriptional regulator of the minB operon. The asymmetrical localization of this protein is probably required for cells to enter a new division cycle. The polypeptide is Cell-division control histidine kinase PdhS (pdhS) (Brucella melitensis biotype 1 (strain ATCC 23456 / CCUG 17765 / NCTC 10094 / 16M)).